The following is a 417-amino-acid chain: Phosphoglycerate kinase 1 (417 aa).

Position 2 is an N-acetylserine (S2). 2 positions are modified to phosphoserine: S2 and S4. N6-succinyllysine is present on K6. At K11 the chain carries N6-acetyllysine. Residues V23, D24, F25, N26, Q38, and R39 each coordinate (2R)-3-phosphoglycerate. The mitochondrial targeting region exposed following cis-trans isomerization by PIN1 and recognized by the TOM complex for mitochondrial translocation of the protein stretch occupies residues 38 to 43 (QRIKAA). The residue at position 48 (K48) is an N6-acetyllysine; alternate. K48 bears the N6-succinyllysine; alternate mark. (2R)-3-phosphoglycerate is bound by residues S62, H63, G65, and R66. K75 carries the post-translational modification N6-acetyllysine. Y76 is modified (phosphotyrosine). N6-acetyllysine is present on residues K86 and K91. K97 is modified (N6-acetyllysine; alternate). Residue K97 is modified to N6-(2-hydroxyisobutyryl)lysine; alternate. (2R)-3-phosphoglycerate is bound by residues L122 and R123. An N6-acetyllysine; alternate modification is found at K131. K131 is subject to N6-malonyllysine; alternate. Residue K146 is modified to N6-acetyllysine. (2R)-3-phosphoglycerate-binding residues include H170 and R171. K191 is modified (N6-succinyllysine). Position 196 is a phosphotyrosine (Y196). K199 carries the N6-acetyllysine modification. S203 bears the Phosphoserine; by MAPK1 mark. G214 contributes to the ADP binding site. G214 is a binding site for CDP. Residues A215 and K216 each contribute to the AMP site. A215 is an ATP binding site. A215 contacts Mg(2+). K216 is subject to N6-(2-hydroxyisobutyryl)lysine. Positions 218 and 219 each coordinate Mg(2+). D219 is a binding site for CDP. K220 contributes to the AMP binding site. K220 serves as a coordination point for ATP. K220 carries the post-translational modification N6-(2-hydroxyisobutyryl)lysine. G238 is an ADP binding site. A CDP-binding site is contributed by G238. An AMP-binding site is contributed by G239. G239 contacts ATP. N6-acetyllysine occurs at positions 267 and 291. Residue G313 coordinates AMP. Residue G313 coordinates ATP. N6-(2-hydroxyisobutyryl)lysine is present on K323. CDP is bound by residues G338, V340, and F343. An ADP-binding site is contributed by F343. AMP is bound at residue E344. Residue E344 participates in ATP binding. N6-acetyllysine is present on K361. Residues D375 and T376 each coordinate ATP. D375 contacts Mg(2+).

It belongs to the phosphoglycerate kinase family. Monomer. Interacts with kinase MAPK1/ERK2; the interaction is direct, occurs under hypoxic conditions, and promotes its interaction with PIN1. Interacts with peptidyl-prolyl cis-trans isomerase PIN1; the interaction is direct, occurs under hypoxic conditions, and targets the protein to the mitochondrion by promoting interactions with the TOM complex. Interacts with mitochondrial circRNA mcPGK1 (via its 2nd stem-loop); the interaction is direct and targets the protein to the mitochondrion by promoting interactions with the TOM complex. Interacts with pyruvate dehydrogenase kinase PDK1; the interaction is direct, occurs under hypoxic conditions and leads to PDK1-mediated inhibition of pyruvate dehydrogenase complex activity. Mg(2+) serves as cofactor. Phosphorylated at Ser-203 by MAPK1/ERK2 under hypoxic conditions, which promotes its mitochondrial targeting. Mainly expressed in spermatogonia. Localized on the principle piece in the sperm (at protein level). Expression significantly decreased in the testis of elderly men.

The protein localises to the cytoplasm. It localises to the cytosol. The protein resides in the mitochondrion matrix. It catalyses the reaction (2R)-3-phosphoglycerate + ATP = (2R)-3-phospho-glyceroyl phosphate + ADP. The enzyme catalyses L-seryl-[protein] + ATP = O-phospho-L-seryl-[protein] + ADP + H(+). Its pathway is carbohydrate degradation; glycolysis; pyruvate from D-glyceraldehyde 3-phosphate: step 2/5. Specifically inhibited by heterocyclic compound CBR-470-0. Its function is as follows. Catalyzes one of the two ATP producing reactions in the glycolytic pathway via the reversible conversion of 1,3-diphosphoglycerate to 3-phosphoglycerate. Both L- and D- forms of purine and pyrimidine nucleotides can be used as substrates, but the activity is much lower on pyrimidines. In addition to its role as a glycolytic enzyme, it seems that PGK1 acts as a polymerase alpha cofactor protein (primer recognition protein). Acts as a protein kinase when localized to the mitochondrion where it phosphorylates pyruvate dehydrogenase kinase PDK1 to inhibit pyruvate dehydrogenase complex activity and suppress the formation of acetyl-coenzyme A from pyruvate, and consequently inhibit oxidative phosphorylation and promote glycolysis. May play a role in sperm motility. This chain is Phosphoglycerate kinase 1 (PGK1), found in Homo sapiens (Human).